The sequence spans 954 residues: Kinesin-like protein KIN-7A (954 aa).

Residues 1 to 29 form a disordered region; sequence MGVSRPPSTPASKIERTPMSTPTPGGSTR. Residues 17 to 28 show a composition bias toward low complexity; sequence TPMSTPTPGGST. A Kinesin motor domain is found at 34 to 354; sequence KIFVTVRVRP…LFFATCAKEV (321 aa). 119 to 126 is a binding site for ATP; it reads GQTSSGKT. 2 coiled-coil regions span residues 363–436 and 480–588; these read VVSD…GDNQ and LKHE…LVMS. Disordered stretches follow at residues 624-689 and 741-762; these read PNLI…SSVN and GKTN…DGPD. Residues 630 to 639 show a composition bias toward low complexity; the sequence is PCSPLSSSRP. 2 stretches are compositionally biased toward basic and acidic residues: residues 640-660 and 666-681; these read LEPE…EGSE and KSED…ETPR.

The protein belongs to the TRAFAC class myosin-kinesin ATPase superfamily. Kinesin family. KIN-7 subfamily. As to expression, ubiquitous with a preferential expression in the shoot apical meristem (SAM).

Its function is as follows. May be essential to promote the progression of cytokinesis during node-internode differentiation. The chain is Kinesin-like protein KIN-7A from Oryza sativa subsp. japonica (Rice).